A 375-amino-acid polypeptide reads, in one-letter code: Baseplate protein gp16 (375 aa).

The protein belongs to the skunalikevirus baseplate protein gp16 family. As to quaternary structure, homotrimer.

Its subcellular location is the virion. Functionally, forms a dome thereby closing the central channel at the end of the baseplate. Changes its conformation upon activation by calcium allowing the channel to open at the bottom of the baseplate for DNA ejection. This is Baseplate protein gp16 from Lactococcus lactis (Lactococcus lactis bacteriophage SK1).